The primary structure comprises 635 residues: Sodium- and chloride-dependent creatine transporter 1 (635 aa).

Positions 1 to 11 (MANKSTENGIY) are enriched in polar residues. A disordered region spans residues 1–27 (MANKSTENGIYSVSGEEKKGPLIAPGP). Residues 1-60 (MANKSTENGIYSVSGEEKKGPLIAPGPDGAPAKGDGPAALGAPGSLLAVPPRETWTRQMD) lie on the Cytoplasmic side of the membrane. A helical transmembrane segment spans residues 61–81 (FIMSCVGFAVGLGNVWRFPYL). Residues 82 to 87 (CYKNGG) are Extracellular-facing. The chain crosses the membrane as a helical span at residues 88 to 108 (GVFLIPYILIALIGGIPIFFL). Over 109–138 (EISLGQFMKAGSINVWNICPLFKGLGYASM) the chain is Cytoplasmic. Residues 139–159 (VIVFYCNTYYIMVLAWGFYYL) form a helical membrane-spanning segment. At 160–230 (VKSFTTTLPW…LSEGLEVPGA (71 aa)) the chain is on the extracellular side. 2 N-linked (GlcNAc...) asparagine glycosylation sites follow: asparagine 192 and asparagine 197. The helical transmembrane segment at 231-251 (LNWEVTLCLLTCWVLVYFCVW) threads the bilayer. Residues 252–269 (KGVKSTGKIVYFTATFPY) are Cytoplasmic-facing. Residues 270–290 (VVLVVLLVRGVLLPGALDGII) traverse the membrane as a helical segment. Topologically, residues 291-304 (YYLKPDWSKLASPQ) are extracellular. A helical membrane pass occupies residues 305–325 (VWIDAGTQIFFSYAIGLGALT). The Cytoplasmic segment spans residues 326 to 341 (ALGSYNRFNNNCYKDA). The helical transmembrane segment at 342–362 (IILALINSGTSFFAGFVVFSI) threads the bilayer. The Extracellular segment spans residues 363–394 (LGFMATEQGVHISKVAESGPGLAFIAYPRAVT). The chain crosses the membrane as a helical span at residues 395–415 (LMPVAPLWAALFFFMLLLLGL). The Cytoplasmic segment spans residues 416 to 444 (DSQFVGVEGFITGLLDLLPASYYFRFQRE). A helical membrane pass occupies residues 445–465 (ISVALCCTICFVIDLSMVTDG). Residues 466 to 479 (GMYVFQLFDYYSAS) lie on the Extracellular side of the membrane. A helical transmembrane segment spans residues 480 to 500 (GTTLLWQAFWECVVVAWVYGA). At 501 to 520 (DRFMDDVACMIGYRPCPWMK) the chain is on the cytoplasmic side. The helical transmembrane segment at 521 to 541 (WCWSFFTPLVCMGIFIFNVVY) threads the bilayer. The Extracellular portion of the chain corresponds to 542–560 (HEPLVYNNTYVYPWWGEAV). Asparagine 548 is a glycosylation site (N-linked (GlcNAc...) asparagine). Residues 561 to 581 (GWAFALSSMLCVPLHLLGCLL) form a helical membrane-spanning segment. Over 582 to 635 (RAKGTMAERWQHLTQPIWGLHHLEYRAQDSDVRGLTTLTPVSESSKVVVVESVM) the chain is Cytoplasmic. Threonine 617 and threonine 620 each carry phosphothreonine. Residue serine 623 is modified to Phosphoserine.

Belongs to the sodium:neurotransmitter symporter (SNF) (TC 2.A.22) family. SLC6A8 subfamily. In terms of processing, glycosylated.

Its subcellular location is the cell membrane. The protein localises to the apical cell membrane. It carries out the reaction creatine(out) + chloride(out) + 2 Na(+)(out) = creatine(in) + chloride(in) + 2 Na(+)(in). Its function is as follows. Creatine:sodium symporter which mediates the uptake of creatine. Plays an important role in supplying creatine to the brain via the blood-brain barrier. This chain is Sodium- and chloride-dependent creatine transporter 1 (SLC6A8), found in Bos taurus (Bovine).